A 478-amino-acid chain; its full sequence is ATP synthase subunit beta (478 aa).

Position 164–171 (164–171 (GGAGVGKT)) interacts with ATP.

It belongs to the ATPase alpha/beta chains family. In terms of assembly, F-type ATPases have 2 components, CF(1) - the catalytic core - and CF(0) - the membrane proton channel. CF(1) has five subunits: alpha(3), beta(3), gamma(1), delta(1), epsilon(1). CF(0) has three main subunits: a(1), b(2) and c(9-12). The alpha and beta chains form an alternating ring which encloses part of the gamma chain. CF(1) is attached to CF(0) by a central stalk formed by the gamma and epsilon chains, while a peripheral stalk is formed by the delta and b chains.

The protein localises to the cell membrane. It catalyses the reaction ATP + H2O + 4 H(+)(in) = ADP + phosphate + 5 H(+)(out). Functionally, produces ATP from ADP in the presence of a proton gradient across the membrane. The catalytic sites are hosted primarily by the beta subunits. The polypeptide is ATP synthase subunit beta (Streptomyces avermitilis (strain ATCC 31267 / DSM 46492 / JCM 5070 / NBRC 14893 / NCIMB 12804 / NRRL 8165 / MA-4680)).